A 469-amino-acid chain; its full sequence is Adenosylhomocysteinase (469 aa).

Positions 63, 139, and 164 each coordinate substrate. 165-167 is an NAD(+) binding site; it reads TTT. 2 residues coordinate substrate: K194 and D198. Residues N199, 228–233, E251, N300, 321–323, and N375 each bind NAD(+); these read GYGDVG and IGH.

Belongs to the adenosylhomocysteinase family. NAD(+) serves as cofactor.

It is found in the cytoplasm. The enzyme catalyses S-adenosyl-L-homocysteine + H2O = L-homocysteine + adenosine. It participates in amino-acid biosynthesis; L-homocysteine biosynthesis; L-homocysteine from S-adenosyl-L-homocysteine: step 1/1. In terms of biological role, may play a key role in the regulation of the intracellular concentration of adenosylhomocysteine. The chain is Adenosylhomocysteinase from Pseudomonas putida (strain ATCC 700007 / DSM 6899 / JCM 31910 / BCRC 17059 / LMG 24140 / F1).